Reading from the N-terminus, the 434-residue chain is Beta-glucuronosyltransferase GlcAT14B (434 aa).

Topologically, residues 1–21 (MKKLKSYYMQVRNQQQSLDRK) are cytoplasmic. The signal-anchor for type II membrane protein transmembrane segment at 22-42 (WILPLAIGSICSLFLLLLTNL) threads the bilayer. The Lumenal segment spans residues 43–434 (ASSSGQTRLI…TENFRPRQCR (392 aa)). N-linked (GlcNAc...) asparagine glycans are attached at residues N138, N187, N316, and N392.

It belongs to the glycosyltransferase 14 family.

It localises to the golgi apparatus membrane. Its function is as follows. Beta-glucuronosyltransferase involved in the biosynthesis of type II arabinogalactan (AG). Modifies both the beta-1,6-linked galactan and beta-1,3-linked galactan present in type II AG. The polypeptide is Beta-glucuronosyltransferase GlcAT14B (Arabidopsis thaliana (Mouse-ear cress)).